Reading from the N-terminus, the 271-residue chain is 4-hydroxy-tetrahydrodipicolinate reductase (271 aa).

NAD(+)-binding positions include glycine 11–methionine 16 and glutamate 37. Arginine 38 is a binding site for NADP(+). Residues glycine 101–threonine 103 and alanine 125–methionine 128 contribute to the NAD(+) site. The Proton donor/acceptor role is filled by histidine 158. Histidine 159 is a binding site for (S)-2,3,4,5-tetrahydrodipicolinate. The active-site Proton donor is the lysine 162. Glycine 168–threonine 169 is a (S)-2,3,4,5-tetrahydrodipicolinate binding site.

The protein belongs to the DapB family.

The protein resides in the cytoplasm. It carries out the reaction (S)-2,3,4,5-tetrahydrodipicolinate + NAD(+) + H2O = (2S,4S)-4-hydroxy-2,3,4,5-tetrahydrodipicolinate + NADH + H(+). It catalyses the reaction (S)-2,3,4,5-tetrahydrodipicolinate + NADP(+) + H2O = (2S,4S)-4-hydroxy-2,3,4,5-tetrahydrodipicolinate + NADPH + H(+). The protein operates within amino-acid biosynthesis; L-lysine biosynthesis via DAP pathway; (S)-tetrahydrodipicolinate from L-aspartate: step 4/4. In terms of biological role, catalyzes the conversion of 4-hydroxy-tetrahydrodipicolinate (HTPA) to tetrahydrodipicolinate. This chain is 4-hydroxy-tetrahydrodipicolinate reductase, found in Shewanella loihica (strain ATCC BAA-1088 / PV-4).